The primary structure comprises 156 residues: SPbeta prophage-derived uncharacterized protein YorH (156 aa).

This is SPbeta prophage-derived uncharacterized protein YorH (yorH) from Bacillus subtilis (strain 168).